The chain runs to 114 residues: Gas vesicle protein J (114 aa).

The interval 63–114 is disordered; it reads PTGTDMERVEEAAGISPDESRSLDTRSESEQMDELPGEAGASVSNTAPQEEE. Residues 80–91 show a composition bias toward basic and acidic residues; the sequence is DESRSLDTRSES. Positions 104–114 are enriched in polar residues; sequence SVSNTAPQEEE.

It belongs to the gas vesicle GvpA family. GvpF to GvpM interact with each other in vitro, and may form multi-subunit complex(es). Interacts with GvpA.

It localises to the gas vesicle. Its function is as follows. A minor component of the gas vesicle, proteins GvpF to GvpM might be involved in nucleating gas vesicle formation. Gas vesicles are hollow, gas filled proteinaceous nanostructures found in some microorganisms. They allow positioning of halobacteria at the optimal depth for growth in the poorly aerated, shallow brine pools of their habitat. In terms of biological role, expression of a 9.5 kb mc-vac DNA fragment containing 2 divergently transcribed regions (gvpD-gvpE-gvpF-gvpG-gvpH-gvpI-gvpJ-gvpK-gvpL-gvpM and gvpA-gvpC-gvpN-gvpO) allows H.volcanii to produce gas vesicles. This is Gas vesicle protein J from Haloferax mediterranei (strain ATCC 33500 / DSM 1411 / JCM 8866 / NBRC 14739 / NCIMB 2177 / R-4) (Halobacterium mediterranei).